Here is a 282-residue protein sequence, read N- to C-terminus: Bifunctional protein FolD (282 aa).

NADP(+)-binding positions include asparagine 163–serine 165, threonine 188, and isoleucine 229.

It belongs to the tetrahydrofolate dehydrogenase/cyclohydrolase family. In terms of assembly, homodimer.

It carries out the reaction (6R)-5,10-methylene-5,6,7,8-tetrahydrofolate + NADP(+) = (6R)-5,10-methenyltetrahydrofolate + NADPH. The enzyme catalyses (6R)-5,10-methenyltetrahydrofolate + H2O = (6R)-10-formyltetrahydrofolate + H(+). It participates in one-carbon metabolism; tetrahydrofolate interconversion. Catalyzes the oxidation of 5,10-methylenetetrahydrofolate to 5,10-methenyltetrahydrofolate and then the hydrolysis of 5,10-methenyltetrahydrofolate to 10-formyltetrahydrofolate. The protein is Bifunctional protein FolD of Malacoplasma penetrans (strain HF-2) (Mycoplasma penetrans).